A 231-amino-acid chain; its full sequence is Ribonuclease HII (231 aa).

Positions 33 to 222 (WPVAGADEAG…FREAQEQPLA (190 aa)) constitute an RNase H type-2 domain. A divalent metal cation contacts are provided by D39, E40, and D130.

Belongs to the RNase HII family. Requires Mn(2+) as cofactor. The cofactor is Mg(2+).

It is found in the cytoplasm. The catalysed reaction is Endonucleolytic cleavage to 5'-phosphomonoester.. Endonuclease that specifically degrades the RNA of RNA-DNA hybrids. This Sinorhizobium fredii (strain NBRC 101917 / NGR234) protein is Ribonuclease HII.